A 399-amino-acid polypeptide reads, in one-letter code: E3 ubiquitin-protein ligase APD4 (399 aa).

Helical transmembrane passes span 42–62 and 284–304; these read FGIIMGLWFFASVCLIFGVYG and LIAYGSFTGVLLSFMLVAIHF. The RING-type zinc-finger motif lies at 348-387; the sequence is CAICFDAPRDCCFLPCGHCVSCYQCGTKIKRTKGRCPICR.

Expressed in the shoot apical meristems (SAM), root tips and inflorescences.

The protein resides in the endomembrane system. It is found in the vacuole membrane. The catalysed reaction is S-ubiquitinyl-[E2 ubiquitin-conjugating enzyme]-L-cysteine + [acceptor protein]-L-lysine = [E2 ubiquitin-conjugating enzyme]-L-cysteine + N(6)-ubiquitinyl-[acceptor protein]-L-lysine.. It functions in the pathway protein modification; protein ubiquitination. Its function is as follows. Involved in pollen mitosis II (PMII) regulation during male gametogenesis. The polypeptide is E3 ubiquitin-protein ligase APD4 (Arabidopsis thaliana (Mouse-ear cress)).